The following is a 244-amino-acid chain: 2,5-diamino-6-ribosylamino-4(3H)-pyrimidinone 5'-phosphate reductase (244 aa).

Residues Thr-79, Asp-83, Val-159, and 182–186 (GANVI) each bind NADP(+).

The protein belongs to the HTP reductase family. As to quaternary structure, homodimer.

The enzyme catalyses 2,5-diamino-6-(1-D-ribitylamino)pyrimidin-4(3H)-one 5'-phosphate + NADP(+) = 2,5-diamino-6-(1-D-ribosylamino)pyrimidin-4(3H)-one 5'-phosphate + NADPH + H(+). It carries out the reaction 2,5-diamino-6-(1-D-ribitylamino)pyrimidin-4(3H)-one 5'-phosphate + NAD(+) = 2,5-diamino-6-(1-D-ribosylamino)pyrimidin-4(3H)-one 5'-phosphate + NADH + H(+). The protein operates within cofactor biosynthesis; riboflavin biosynthesis. Functionally, catalyzes an early step in riboflavin biosynthesis, the NADPH-dependent reduction of the ribose side chain of 2,5-diamino-6-ribosylamino-4(3H)-pyrimidinone 5'-phosphate, yielding 2,5-diamino-6-ribitylamino-4(3H)-pyrimidinone 5'-phosphate. The polypeptide is 2,5-diamino-6-ribosylamino-4(3H)-pyrimidinone 5'-phosphate reductase (RIB7) (Saccharomyces cerevisiae (strain ATCC 204508 / S288c) (Baker's yeast)).